Consider the following 116-residue polypeptide: Aspartate 1-decarboxylase (116 aa).

Residue serine 25 is the Schiff-base intermediate with substrate; via pyruvic acid of the active site. Serine 25 carries the pyruvic acid (Ser) modification. Threonine 57 contacts substrate. The Proton donor role is filled by tyrosine 58. 73-75 (GAA) serves as a coordination point for substrate.

Belongs to the PanD family. As to quaternary structure, heterooctamer of four alpha and four beta subunits. The cofactor is pyruvate. In terms of processing, is synthesized initially as an inactive proenzyme, which is activated by self-cleavage at a specific serine bond to produce a beta-subunit with a hydroxyl group at its C-terminus and an alpha-subunit with a pyruvoyl group at its N-terminus.

It localises to the cytoplasm. The enzyme catalyses L-aspartate + H(+) = beta-alanine + CO2. Its pathway is cofactor biosynthesis; (R)-pantothenate biosynthesis; beta-alanine from L-aspartate: step 1/1. In terms of biological role, catalyzes the pyruvoyl-dependent decarboxylation of aspartate to produce beta-alanine. The sequence is that of Aspartate 1-decarboxylase from Christiangramia forsetii (strain DSM 17595 / CGMCC 1.15422 / KT0803) (Gramella forsetii).